Reading from the N-terminus, the 564-residue chain is Potassium-transporting ATPase potassium-binding subunit (564 aa).

The next 10 membrane-spanning stretches (helical) occupy residues 4–24, 67–87, 135–155, 179–199, 254–274, 286–306, 382–402, 420–440, 487–507, and 528–548; these read YDYW…PFLG, MLAL…ILLF, AGLT…LVAL, LYGL…QGVP, WANL…VFTF, AILG…LWAE, AGMY…GLMI, LLVV…AIAA, LMLG…VLAL, and GPLF…LTFL.

The protein belongs to the KdpA family. In terms of assembly, the system is composed of three essential subunits: KdpA, KdpB and KdpC.

It localises to the cell inner membrane. Part of the high-affinity ATP-driven potassium transport (or Kdp) system, which catalyzes the hydrolysis of ATP coupled with the electrogenic transport of potassium into the cytoplasm. This subunit binds the periplasmic potassium ions and delivers the ions to the membrane domain of KdpB through an intramembrane tunnel. This chain is Potassium-transporting ATPase potassium-binding subunit, found in Pseudomonas fluorescens (strain SBW25).